Reading from the N-terminus, the 368-residue chain is Endophilin-A2 (368 aa).

Residues 1 to 21 (MSVAGLKKQFYKASQLVSEKV) are membrane-binding amphipathic helix. Residues 18–249 (SEKVGGAEGT…LKRRMREASS (232 aa)) form the BAR domain. Positions 60–87 (PNPASRAKLTMLNTVSKIRGQVKNPGYP) are required for dimerization upon membrane association. The stretch at 181–250 (EELRQAMEKF…KRRMREASSR (70 aa)) forms a coiled coil. An interaction with ARC region spans residues 218–254 (LVDAQLDYHRQAVQILDELADKLKRRMREASSRPKRE). A disordered region spans residues 243 to 308 (RMREASSRPK…PSRSMPPLDQ (66 aa)). Over residues 245–263 (REASSRPKREYKPKPRELL) the composition is skewed to basic and acidic residues. Phosphoserine is present on residues Ser-288 and Ser-292. The residue at position 298 (Thr-298) is a Phosphothreonine. The region spanning 306-365 (LDQPSCKALYDFEPENDGELGFHEGDIITLTNQIDENWYEGMLDGQSGFFPLSYVEVLVP) is the SH3 domain. Tyr-315 carries the phosphotyrosine modification.

The protein belongs to the endophilin family. As to quaternary structure, interacts with ARC, SYNJ1 and DNM1. Interacts with PDCD6IP. Interacts with BIN2.

It localises to the cytoplasm. The protein localises to the early endosome membrane. It is found in the cell projection. The protein resides in the podosome. In terms of biological role, implicated in endocytosis. May recruit other proteins to membranes with high curvature. The chain is Endophilin-A2 from Bos taurus (Bovine).